The following is a 252-amino-acid chain: 2-succinyl-6-hydroxy-2,4-cyclohexadiene-1-carboxylate synthase (252 aa).

Belongs to the AB hydrolase superfamily. MenH family. Monomer.

The catalysed reaction is 5-enolpyruvoyl-6-hydroxy-2-succinyl-cyclohex-3-ene-1-carboxylate = (1R,6R)-6-hydroxy-2-succinyl-cyclohexa-2,4-diene-1-carboxylate + pyruvate. The protein operates within quinol/quinone metabolism; 1,4-dihydroxy-2-naphthoate biosynthesis; 1,4-dihydroxy-2-naphthoate from chorismate: step 3/7. It functions in the pathway quinol/quinone metabolism; menaquinone biosynthesis. Its function is as follows. Catalyzes a proton abstraction reaction that results in 2,5-elimination of pyruvate from 2-succinyl-5-enolpyruvyl-6-hydroxy-3-cyclohexene-1-carboxylate (SEPHCHC) and the formation of 2-succinyl-6-hydroxy-2,4-cyclohexadiene-1-carboxylate (SHCHC). This chain is 2-succinyl-6-hydroxy-2,4-cyclohexadiene-1-carboxylate synthase, found in Escherichia coli O17:K52:H18 (strain UMN026 / ExPEC).